A 225-amino-acid chain; its full sequence is Protein-L-isoaspartate O-methyltransferase (225 aa).

Ser-75 is a catalytic residue.

The protein belongs to the methyltransferase superfamily. L-isoaspartyl/D-aspartyl protein methyltransferase family.

The protein localises to the cytoplasm. The catalysed reaction is [protein]-L-isoaspartate + S-adenosyl-L-methionine = [protein]-L-isoaspartate alpha-methyl ester + S-adenosyl-L-homocysteine. Catalyzes the methyl esterification of L-isoaspartyl residues in peptides and proteins that result from spontaneous decomposition of normal L-aspartyl and L-asparaginyl residues. It plays a role in the repair and/or degradation of damaged proteins. In Stenotrophomonas maltophilia (strain R551-3), this protein is Protein-L-isoaspartate O-methyltransferase.